The following is a 368-amino-acid chain: MAPVSWGQALRNYKPTGQQLFFSLTALLAAAVWGRDRQLDIGLFSPQSQLLALGLGFSLAAIAGYWVVPLLRRIKAGQFIREDGPQSHLQKAGTPTMGGIFAIPAGLLPALILAGRSPLVWALAFVTLAYATIGWLDDWQILRHRNNKGISPKLKLCLQFGAAFLFCLWLISQQGWQGTITTITLPFGWSLALSLLFWPLAVFTLVSESNATNLTDGLDGLAGGTGAAVLAGLGLWLAPQDPAIATFCCSLAGGFLGFLLHNRNPARVFMGDTGSLALGGAIAAIAIVANCLWVLLVMGGLFVLESISVILQVSYYKATKGPDGKGKRLLRMAPWHHHLELGGWSETQVVASFYGLTLLLIASCWLLN.

Transmembrane regions (helical) follow at residues 50–70, 95–115, 117–137, 156–176, 183–203, 218–238, 242–262, 284–304, and 347–367; these read LLALGLGFSLAAIAGYWVVPL, PTMGGIFAIPAGLLPALILAG, SPLVWALAFVTLAYATIGWLD, LCLQFGAAFLFCLWLISQQGW, ITLPFGWSLALSLLFWPLAVF, LDGLAGGTGAAVLAGLGLWLA, PAIATFCCSLAGGFLGFLLHN, AIAIVANCLWVLLVMGGLFVL, and TQVVASFYGLTLLLIASCWLL.

This sequence belongs to the glycosyltransferase 4 family. MraY subfamily. The cofactor is Mg(2+).

The protein resides in the cell inner membrane. The enzyme catalyses UDP-N-acetyl-alpha-D-muramoyl-L-alanyl-gamma-D-glutamyl-meso-2,6-diaminopimeloyl-D-alanyl-D-alanine + di-trans,octa-cis-undecaprenyl phosphate = di-trans,octa-cis-undecaprenyl diphospho-N-acetyl-alpha-D-muramoyl-L-alanyl-D-glutamyl-meso-2,6-diaminopimeloyl-D-alanyl-D-alanine + UMP. The protein operates within cell wall biogenesis; peptidoglycan biosynthesis. Catalyzes the initial step of the lipid cycle reactions in the biosynthesis of the cell wall peptidoglycan: transfers peptidoglycan precursor phospho-MurNAc-pentapeptide from UDP-MurNAc-pentapeptide onto the lipid carrier undecaprenyl phosphate, yielding undecaprenyl-pyrophosphoryl-MurNAc-pentapeptide, known as lipid I. The protein is Phospho-N-acetylmuramoyl-pentapeptide-transferase of Synechococcus sp. (strain ATCC 27144 / PCC 6301 / SAUG 1402/1) (Anacystis nidulans).